The chain runs to 446 residues: Phosphoglucosamine mutase (446 aa).

Ser103 acts as the Phosphoserine intermediate in catalysis. Ser103, Asp242, Asp244, and Asp246 together coordinate Mg(2+). Phosphoserine is present on Ser103.

Belongs to the phosphohexose mutase family. Mg(2+) serves as cofactor. In terms of processing, activated by phosphorylation.

It catalyses the reaction alpha-D-glucosamine 1-phosphate = D-glucosamine 6-phosphate. Its function is as follows. Catalyzes the conversion of glucosamine-6-phosphate to glucosamine-1-phosphate. This is Phosphoglucosamine mutase from Vibrio atlanticus (strain LGP32) (Vibrio splendidus (strain Mel32)).